The sequence spans 306 residues: Beta-lactamase (306 aa).

A signal peptide (tat-type signal) is located at residues 1–34 (MDRTTARPNRRAVLATGVGAALAATAAAAGPAHA). Ser-82 serves as the catalytic Acyl-ester intermediate. 250–252 (KTG) provides a ligand contact to substrate.

This sequence belongs to the class-A beta-lactamase family. Predicted to be exported by the Tat system. The position of the signal peptide cleavage has not been experimentally proven.

It catalyses the reaction a beta-lactam + H2O = a substituted beta-amino acid. The sequence is that of Beta-lactamase (blaF) from Streptomyces fradiae (Streptomyces roseoflavus).